We begin with the raw amino-acid sequence, 486 residues long: ATP synthase subunit beta (486 aa).

ATP is bound at residue 164–171 (GGAGVGKT).

Belongs to the ATPase alpha/beta chains family. In terms of assembly, F-type ATPases have 2 components, CF(1) - the catalytic core - and CF(0) - the membrane proton channel. CF(1) has five subunits: alpha(3), beta(3), gamma(1), delta(1), epsilon(1). CF(0) has four main subunits: a(1), b(1), b'(1) and c(9-12).

It is found in the cellular thylakoid membrane. The enzyme catalyses ATP + H2O + 4 H(+)(in) = ADP + phosphate + 5 H(+)(out). Functionally, produces ATP from ADP in the presence of a proton gradient across the membrane. The catalytic sites are hosted primarily by the beta subunits. In Prochlorococcus marinus subsp. pastoris (strain CCMP1986 / NIES-2087 / MED4), this protein is ATP synthase subunit beta.